The following is a 62-amino-acid chain: uncharacterized protein (62 aa).

It is found in the mitochondrion. This is an uncharacterized protein from Marchantia polymorpha (Common liverwort).